The following is a 116-amino-acid chain: S-adenosylmethionine decarboxylase proenzyme (116 aa).

Residue Ser-63 is the Schiff-base intermediate with substrate; via pyruvic acid of the active site. Ser-63 is modified (pyruvic acid (Ser); by autocatalysis). Catalysis depends on His-68, which acts as the Proton acceptor; for processing activity. Cys-83 (proton donor; for catalytic activity) is an active-site residue.

Belongs to the prokaryotic AdoMetDC family. Type 1 subfamily. In terms of assembly, heterotetramer of two alpha and two beta chains arranged as a dimer of alpha/beta heterodimers. The cofactor is pyruvate. In terms of processing, is synthesized initially as an inactive proenzyme. Formation of the active enzyme involves a self-maturation process in which the active site pyruvoyl group is generated from an internal serine residue via an autocatalytic post-translational modification. Two non-identical subunits are generated from the proenzyme in this reaction, and the pyruvate is formed at the N-terminus of the alpha chain, which is derived from the carboxyl end of the proenzyme. The post-translation cleavage follows an unusual pathway, termed non-hydrolytic serinolysis, in which the side chain hydroxyl group of the serine supplies its oxygen atom to form the C-terminus of the beta chain, while the remainder of the serine residue undergoes an oxidative deamination to produce ammonia and the pyruvoyl group blocking the N-terminus of the alpha chain.

The catalysed reaction is S-adenosyl-L-methionine + H(+) = S-adenosyl 3-(methylsulfanyl)propylamine + CO2. Its pathway is amine and polyamine biosynthesis; S-adenosylmethioninamine biosynthesis; S-adenosylmethioninamine from S-adenosyl-L-methionine: step 1/1. Functionally, catalyzes the decarboxylation of S-adenosylmethionine to S-adenosylmethioninamine (dcAdoMet), the propylamine donor required for the synthesis of the polyamines spermine and spermidine from the diamine putrescine. In Clostridium botulinum (strain ATCC 19397 / Type A), this protein is S-adenosylmethionine decarboxylase proenzyme.